The following is a 298-amino-acid chain: Acetylglutamate kinase (298 aa).

Substrate is bound by residues 69–70 (GG), Arg91, and Asn196.

It belongs to the acetylglutamate kinase family. ArgB subfamily.

The protein localises to the cytoplasm. The enzyme catalyses N-acetyl-L-glutamate + ATP = N-acetyl-L-glutamyl 5-phosphate + ADP. It functions in the pathway amino-acid biosynthesis; L-arginine biosynthesis; N(2)-acetyl-L-ornithine from L-glutamate: step 2/4. Its function is as follows. Catalyzes the ATP-dependent phosphorylation of N-acetyl-L-glutamate. The polypeptide is Acetylglutamate kinase (Nitrobacter winogradskyi (strain ATCC 25391 / DSM 10237 / CIP 104748 / NCIMB 11846 / Nb-255)).